The primary structure comprises 151 residues: Ribosome maturation factor RimP (151 aa).

It belongs to the RimP family.

The protein resides in the cytoplasm. Functionally, required for maturation of 30S ribosomal subunits. This is Ribosome maturation factor RimP from Shewanella frigidimarina (strain NCIMB 400).